Reading from the N-terminus, the 123-residue chain is Ribosome-binding factor A (123 aa).

The protein belongs to the RbfA family. Monomer. Binds 30S ribosomal subunits, but not 50S ribosomal subunits or 70S ribosomes.

It is found in the cytoplasm. Functionally, one of several proteins that assist in the late maturation steps of the functional core of the 30S ribosomal subunit. Associates with free 30S ribosomal subunits (but not with 30S subunits that are part of 70S ribosomes or polysomes). Required for efficient processing of 16S rRNA. May interact with the 5'-terminal helix region of 16S rRNA. The sequence is that of Ribosome-binding factor A from Chlamydia trachomatis serovar L2 (strain ATCC VR-902B / DSM 19102 / 434/Bu).